Reading from the N-terminus, the 175-residue chain is Zinc finger protein ZAT18 (175 aa).

2 consecutive C2H2-type zinc fingers follow at residues 49-71 and 93-115; these read FECK…RASH and HKCT…MRKH. The Nuclear localization signal signature appears at 71 to 78; that stretch reads HKKPKLIV. Residues 146–152 carry the EAR-like (transcriptional repression) motif; the sequence is LDLNLTP.

Mostly expressed in stems, siliques and leaves, and, to a lower extent, in cotyledons, hypocotyls and roots.

The protein localises to the nucleus. In terms of biological role, transcription factor involved in stress responses. Positive regulator of the jasmonic acid (JA)- mediated signaling pathway. Triggers the up-regulation of LOX3, VSP2, PAL1 and PAL2 in a JA-dependent manner. Promotes drought and osmotic stress tolerance by preventing reactive oxygen species (ROS) production (e.g. H(2)O(2)). The polypeptide is Zinc finger protein ZAT18 (Arabidopsis thaliana (Mouse-ear cress)).